Consider the following 206-residue polypeptide: Small ribosomal subunit protein uS4 (206 aa).

The 62-residue stretch at Q96–A157 folds into the S4 RNA-binding domain.

This sequence belongs to the universal ribosomal protein uS4 family. Part of the 30S ribosomal subunit. Contacts protein S5. The interaction surface between S4 and S5 is involved in control of translational fidelity.

Functionally, one of the primary rRNA binding proteins, it binds directly to 16S rRNA where it nucleates assembly of the body of the 30S subunit. Its function is as follows. With S5 and S12 plays an important role in translational accuracy. The chain is Small ribosomal subunit protein uS4 from Idiomarina loihiensis (strain ATCC BAA-735 / DSM 15497 / L2-TR).